The chain runs to 181 residues: Cell division protein ZapC (181 aa).

It belongs to the ZapC family. As to quaternary structure, interacts directly with FtsZ.

It localises to the cytoplasm. Its function is as follows. Contributes to the efficiency of the cell division process by stabilizing the polymeric form of the cell division protein FtsZ. Acts by promoting interactions between FtsZ protofilaments and suppressing the GTPase activity of FtsZ. This Shewanella woodyi (strain ATCC 51908 / MS32) protein is Cell division protein ZapC.